We begin with the raw amino-acid sequence, 554 residues long: Apyrase (554 aa).

Residues Met1–Ser21 form the signal peptide. A divalent metal cation contacts are provided by Asp43, His45, Asp92, Asn124, His224, and His248. Residues Arg358, Asn394, Arg399, Phe418, Phe504, and Asp510 each coordinate AMP.

It belongs to the 5'-nucleotidase family. A divalent metal cation serves as cofactor. As to expression, salivary gland (at protein level).

The protein resides in the secreted. The catalysed reaction is a ribonucleoside 5'-triphosphate + 2 H2O = a ribonucleoside 5'-phosphate + 2 phosphate + 2 H(+). Facilitates hematophagy by inhibiting ADP-dependent platelet aggregation in the host. Cleaves adenosine triphosphate (ATP) and adenosine diphosphate (ADP) to adenosine monophosphate (AMP) and inorganic phosphate. Shows potential for antithrombotic activity. Can induce basophil activation. May reduce probing time by facilitating the speed of locating blood. The chain is Apyrase from Tabanus yao (Horsefly).